A 482-amino-acid polypeptide reads, in one-letter code: ATP synthase subunit beta (482 aa).

Position 161–168 (161–168 (GGAGVGKT)) interacts with ATP.

It belongs to the ATPase alpha/beta chains family. As to quaternary structure, F-type ATPases have 2 components, CF(1) - the catalytic core - and CF(0) - the membrane proton channel. CF(1) has five subunits: alpha(3), beta(3), gamma(1), delta(1), epsilon(1). CF(0) has four main subunits: a(1), b(1), b'(1) and c(9-12).

Its subcellular location is the cellular thylakoid membrane. It carries out the reaction ATP + H2O + 4 H(+)(in) = ADP + phosphate + 5 H(+)(out). Its function is as follows. Produces ATP from ADP in the presence of a proton gradient across the membrane. The catalytic sites are hosted primarily by the beta subunits. The protein is ATP synthase subunit beta of Microcystis aeruginosa (strain NIES-843 / IAM M-2473).